A 382-amino-acid polypeptide reads, in one-letter code: UDP-4-amino-4-deoxy-L-arabinose--oxoglutarate aminotransferase (382 aa).

Lys-182 carries the N6-(pyridoxal phosphate)lysine modification.

It belongs to the DegT/DnrJ/EryC1 family. ArnB subfamily. As to quaternary structure, homodimer. Requires pyridoxal 5'-phosphate as cofactor.

The catalysed reaction is UDP-4-amino-4-deoxy-beta-L-arabinose + 2-oxoglutarate = UDP-beta-L-threo-pentopyranos-4-ulose + L-glutamate. It functions in the pathway nucleotide-sugar biosynthesis; UDP-4-deoxy-4-formamido-beta-L-arabinose biosynthesis; UDP-4-deoxy-4-formamido-beta-L-arabinose from UDP-alpha-D-glucuronate: step 2/3. It participates in bacterial outer membrane biogenesis; lipopolysaccharide biosynthesis. Its function is as follows. Catalyzes the conversion of UDP-4-keto-arabinose (UDP-Ara4O) to UDP-4-amino-4-deoxy-L-arabinose (UDP-L-Ara4N). The modified arabinose is attached to lipid A and is required for resistance to polymyxin and cationic antimicrobial peptides. In Pectobacterium carotovorum subsp. carotovorum (strain PC1), this protein is UDP-4-amino-4-deoxy-L-arabinose--oxoglutarate aminotransferase.